The chain runs to 265 residues: Ribosomal RNA small subunit methyltransferase A (265 aa).

Positions 13, 15, 40, 61, 85, and 103 each coordinate S-adenosyl-L-methionine.

Belongs to the class I-like SAM-binding methyltransferase superfamily. rRNA adenine N(6)-methyltransferase family. RsmA subfamily.

The protein localises to the cytoplasm. The catalysed reaction is adenosine(1518)/adenosine(1519) in 16S rRNA + 4 S-adenosyl-L-methionine = N(6)-dimethyladenosine(1518)/N(6)-dimethyladenosine(1519) in 16S rRNA + 4 S-adenosyl-L-homocysteine + 4 H(+). Its function is as follows. Specifically dimethylates two adjacent adenosines (A1518 and A1519) in the loop of a conserved hairpin near the 3'-end of 16S rRNA in the 30S particle. May play a critical role in biogenesis of 30S subunits. In Bordetella pertussis (strain Tohama I / ATCC BAA-589 / NCTC 13251), this protein is Ribosomal RNA small subunit methyltransferase A.